Here is a 133-residue protein sequence, read N- to C-terminus: Urease subunit beta (133 aa).

The tract at residues 106–133 is disordered; the sequence is VFRPNDSNQNAAVKNDAGEDNANKKGGK.

This sequence belongs to the urease beta subunit family. As to quaternary structure, heterotrimer of UreA (gamma), UreB (beta) and UreC (alpha) subunits. Three heterotrimers associate to form the active enzyme.

The protein resides in the cytoplasm. It carries out the reaction urea + 2 H2O + H(+) = hydrogencarbonate + 2 NH4(+). Its pathway is nitrogen metabolism; urea degradation; CO(2) and NH(3) from urea (urease route): step 1/1. In Staphylococcus epidermidis (strain ATCC 12228 / FDA PCI 1200), this protein is Urease subunit beta.